The primary structure comprises 189 residues: Peptidyl-tRNA hydrolase (189 aa).

Tyrosine 15 is a binding site for tRNA. Histidine 20 functions as the Proton acceptor in the catalytic mechanism. Residues tyrosine 65, asparagine 67, and asparagine 113 each coordinate tRNA.

It belongs to the PTH family. In terms of assembly, monomer.

The protein localises to the cytoplasm. The catalysed reaction is an N-acyl-L-alpha-aminoacyl-tRNA + H2O = an N-acyl-L-amino acid + a tRNA + H(+). Hydrolyzes ribosome-free peptidyl-tRNAs (with 1 or more amino acids incorporated), which drop off the ribosome during protein synthesis, or as a result of ribosome stalling. Functionally, catalyzes the release of premature peptidyl moieties from peptidyl-tRNA molecules trapped in stalled 50S ribosomal subunits, and thus maintains levels of free tRNAs and 50S ribosomes. The sequence is that of Peptidyl-tRNA hydrolase from Caldicellulosiruptor saccharolyticus (strain ATCC 43494 / DSM 8903 / Tp8T 6331).